The following is a 330-amino-acid chain: Beta-ketoacyl-[acyl-carrier-protein] synthase III (330 aa).

Catalysis depends on residues C114 and H255. Residues 256 to 260 (QANQR) are ACP-binding. N285 is a catalytic residue.

This sequence belongs to the thiolase-like superfamily. FabH family. As to quaternary structure, homodimer.

It localises to the cytoplasm. The enzyme catalyses malonyl-[ACP] + acetyl-CoA + H(+) = 3-oxobutanoyl-[ACP] + CO2 + CoA. It participates in lipid metabolism; fatty acid biosynthesis. Its function is as follows. Catalyzes the condensation reaction of fatty acid synthesis by the addition to an acyl acceptor of two carbons from malonyl-ACP. Catalyzes the first condensation reaction which initiates fatty acid synthesis and may therefore play a role in governing the total rate of fatty acid production. Possesses both acetoacetyl-ACP synthase and acetyl transacylase activities. Its substrate specificity determines the biosynthesis of branched-chain and/or straight-chain of fatty acids. The chain is Beta-ketoacyl-[acyl-carrier-protein] synthase III from Nostoc sp. (strain PCC 7120 / SAG 25.82 / UTEX 2576).